Here is a 1247-residue protein sequence, read N- to C-terminus: Nitric oxide synthase (1247 aa).

Residues 13 to 33 are disordered; it reads EVAEGRESSKANHIGEERRGY. S146 lines the (6R)-L-erythro-5,6,7,8-tetrahydrobiopterin pocket. C224 serves as a coordination point for heme b. Residues Q287, W396, Y397, E401, and N406 each contribute to the L-arginine site. (6R)-L-erythro-5,6,7,8-tetrahydrobiopterin-binding residues include W487 and F500. A heme b-binding site is contributed by Y515. The tract at residues 537–557 is calmodulin-binding; sequence PRRKFNFKQIARAVKFTSKLF. The 200-residue stretch at 567-766 folds into the Flavodoxin-like domain; it reads ATVLYATETG…AFRKWAPEVF (200 aa). 712-743 provides a ligand contact to FMN; the sequence is VFALGSSAYPNFCAFGKYIDNILGELGGERLM. Residues 795–1065 enclose the FAD-binding FR-type domain; it reads NTVRYAPVAE…VRSAPSFHMS (271 aa). Residues 855–866 and 998–1008 each bind FAD; these read YEPGDHVGIFPA and LQPRFYSISSS. NADP(+)-binding positions include 1073–1091 and 1170–1185; these read ILIG…WQEW and KGHI…AEHV.

The protein belongs to the NOS family. Heme b is required as a cofactor. FAD serves as cofactor. The cofactor is FMN.

The enzyme catalyses 2 L-arginine + 3 NADPH + 4 O2 + H(+) = 2 L-citrulline + 2 nitric oxide + 3 NADP(+) + 4 H2O. Its activity is regulated as follows. Stimulated by calcium/calmodulin. Its function is as follows. Produces nitric oxide (NO) which is a messenger molecule with diverse functions throughout the body. Nitric oxide limits plasmodium development in the midgut. The protein is Nitric oxide synthase of Anopheles stephensi (Indo-Pakistan malaria mosquito).